The primary structure comprises 162 residues: uncharacterized protein (162 aa).

3 helical membrane passes run 7-27 (LIAD…IVGL), 51-71 (LSIL…YMIG), and 134-154 (TYVA…ITIG).

Belongs to the DedA family.

It is found in the cell membrane. This is an uncharacterized protein from Bacillus subtilis (strain 168).